A 190-amino-acid polypeptide reads, in one-letter code: Elongation factor P-like protein (190 aa).

Belongs to the elongation factor P family.

This is Elongation factor P-like protein from Proteus mirabilis (strain HI4320).